The following is a 225-amino-acid chain: Histone H1 (225 aa).

The tract at residues 1 to 20 (MGPKATSGTRGRGKKVGTKT) is disordered. Positions 23–94 (PLPKYKDLIV…GPAGSIKLLK (72 aa)) constitute an H15 domain. The segment at 95-147 (KAAQPKPEEAKRAAKPAKRVVKAAKPAKAKPAKAAKAAKPAKPVKAAKAASAV) is disordered. Residues 107–127 (AAKPAKRVVKAAKPAKAKPAK) are compositionally biased toward basic residues. The span at 128–147 (AAKAAKPAKPVKAAKAASAV) shows a compositional bias: low complexity.

This sequence belongs to the histone H1/H5 family.

It localises to the nucleus. The protein localises to the chromosome. Functionally, could act as an H1-type linker histone. This is Histone H1 (HHOA) from Eremothecium gossypii (strain ATCC 10895 / CBS 109.51 / FGSC 9923 / NRRL Y-1056) (Yeast).